The following is a 198-amino-acid chain: Na(+)-translocating NADH-quinone reductase subunit E (198 aa).

6 consecutive transmembrane segments (helical) span residues 11-31 (SIFI…FLAV), 39-59 (MGLG…NNLI), 77-97 (FLSF…LEMA), 110-130 (GIFL…SFMV), 140-160 (VVYG…MAGI), and 176-196 (LGIT…FSGI).

This sequence belongs to the NqrDE/RnfAE family. In terms of assembly, composed of six subunits; NqrA, NqrB, NqrC, NqrD, NqrE and NqrF.

Its subcellular location is the cell inner membrane. The catalysed reaction is a ubiquinone + n Na(+)(in) + NADH + H(+) = a ubiquinol + n Na(+)(out) + NAD(+). In terms of biological role, NQR complex catalyzes the reduction of ubiquinone-1 to ubiquinol by two successive reactions, coupled with the transport of Na(+) ions from the cytoplasm to the periplasm. NqrA to NqrE are probably involved in the second step, the conversion of ubisemiquinone to ubiquinol. This Aeromonas hydrophila subsp. hydrophila (strain ATCC 7966 / DSM 30187 / BCRC 13018 / CCUG 14551 / JCM 1027 / KCTC 2358 / NCIMB 9240 / NCTC 8049) protein is Na(+)-translocating NADH-quinone reductase subunit E.